A 105-amino-acid polypeptide reads, in one-letter code: Large ribosomal subunit protein uL24 (105 aa).

It belongs to the universal ribosomal protein uL24 family. In terms of assembly, part of the 50S ribosomal subunit.

Its function is as follows. One of two assembly initiator proteins, it binds directly to the 5'-end of the 23S rRNA, where it nucleates assembly of the 50S subunit. Functionally, one of the proteins that surrounds the polypeptide exit tunnel on the outside of the subunit. In Novosphingobium aromaticivorans (strain ATCC 700278 / DSM 12444 / CCUG 56034 / CIP 105152 / NBRC 16084 / F199), this protein is Large ribosomal subunit protein uL24.